Consider the following 261-residue polypeptide: Thiazole synthase (261 aa).

The Schiff-base intermediate with DXP role is filled by lysine 97. 1-deoxy-D-xylulose 5-phosphate-binding positions include glycine 158, 184–185 (AG), and 206–207 (AS).

This sequence belongs to the ThiG family. In terms of assembly, homotetramer. Forms heterodimers with either ThiH or ThiS.

Its subcellular location is the cytoplasm. It catalyses the reaction [ThiS sulfur-carrier protein]-C-terminal-Gly-aminoethanethioate + 2-iminoacetate + 1-deoxy-D-xylulose 5-phosphate = [ThiS sulfur-carrier protein]-C-terminal Gly-Gly + 2-[(2R,5Z)-2-carboxy-4-methylthiazol-5(2H)-ylidene]ethyl phosphate + 2 H2O + H(+). It functions in the pathway cofactor biosynthesis; thiamine diphosphate biosynthesis. Its function is as follows. Catalyzes the rearrangement of 1-deoxy-D-xylulose 5-phosphate (DXP) to produce the thiazole phosphate moiety of thiamine. Sulfur is provided by the thiocarboxylate moiety of the carrier protein ThiS. In vitro, sulfur can be provided by H(2)S. This Corynebacterium diphtheriae (strain ATCC 700971 / NCTC 13129 / Biotype gravis) protein is Thiazole synthase.